We begin with the raw amino-acid sequence, 276 residues long: NADPH-dependent 7-cyano-7-deazaguanine reductase (276 aa).

Isoleucine 83–serine 85 contributes to the substrate binding site. Residue serine 85 to lysine 86 coordinates NADPH. Catalysis depends on cysteine 184, which acts as the Thioimide intermediate. The Proton donor role is filled by aspartate 191. Histidine 223–glutamate 224 lines the substrate pocket. Arginine 252–glycine 253 lines the NADPH pocket.

Belongs to the GTP cyclohydrolase I family. QueF type 2 subfamily. In terms of assembly, homodimer.

The protein resides in the cytoplasm. It carries out the reaction 7-aminomethyl-7-carbaguanine + 2 NADP(+) = 7-cyano-7-deazaguanine + 2 NADPH + 3 H(+). Its pathway is tRNA modification; tRNA-queuosine biosynthesis. Its function is as follows. Catalyzes the NADPH-dependent reduction of 7-cyano-7-deazaguanine (preQ0) to 7-aminomethyl-7-deazaguanine (preQ1). This chain is NADPH-dependent 7-cyano-7-deazaguanine reductase, found in Pseudomonas paraeruginosa (strain DSM 24068 / PA7) (Pseudomonas aeruginosa (strain PA7)).